A 641-amino-acid polypeptide reads, in one-letter code: Pumilio homolog 24 (641 aa).

The interval 1-82 (MSSKGLKPQK…LTEARKKKRK (82 aa)) is disordered. The 396-residue stretch at 9 to 404 (QKSTKRKDTD…RPLLQLLHPN (396 aa)) folds into the PUM-HD domain. 2 stretches are compositionally biased toward basic and acidic residues: residues 14-27 (RKDT…DSLK) and 67-76 (RVQAKELTEA). Pumilio repeat units follow at residues 118–153 (KMKG…VLFT), 154–189 (ELQP…ACIS), 190–225 (SLRG…ELLA), 303–340 (QLLT…KIIK), and 341–378 (AMKE…IIVR). The tract at residues 427 to 468 (MDKSETSSKTKDTDGNEIGEETKDEQEDTVAEHSDHEENVTA) is disordered. The span at 428 to 440 (DKSETSSKTKDTD) shows a compositional bias: basic and acidic residues. A compositionally biased stretch (acidic residues) spans 441-455 (GNEIGEETKDEQEDT). Residues 456-468 (VAEHSDHEENVTA) show a composition bias toward basic and acidic residues.

It is found in the nucleus. Its subcellular location is the nucleolus. Its function is as follows. Sequence-specific RNA-binding protein that regulates translation and mRNA stability by binding the 3'-UTR of target mRNAs. The protein is Pumilio homolog 24 (APUM24) of Arabidopsis thaliana (Mouse-ear cress).